The primary structure comprises 200 residues: uncharacterized protein (200 aa).

Residues 1 to 21 form a disordered region; that stretch reads MSNSAQRDARNSRDESARASD. A compositionally biased stretch (basic and acidic residues) spans 7-21; sequence RDARNSRDESARASD.

This is an uncharacterized protein from Mycobacterium tuberculosis (strain ATCC 25618 / H37Rv).